Reading from the N-terminus, the 338-residue chain is Tetraacyldisaccharide 4'-kinase (338 aa).

Histidine 51–threonine 58 provides a ligand contact to ATP.

Belongs to the LpxK family.

It catalyses the reaction a lipid A disaccharide + ATP = a lipid IVA + ADP + H(+). It functions in the pathway glycolipid biosynthesis; lipid IV(A) biosynthesis; lipid IV(A) from (3R)-3-hydroxytetradecanoyl-[acyl-carrier-protein] and UDP-N-acetyl-alpha-D-glucosamine: step 6/6. Functionally, transfers the gamma-phosphate of ATP to the 4'-position of a tetraacyldisaccharide 1-phosphate intermediate (termed DS-1-P) to form tetraacyldisaccharide 1,4'-bis-phosphate (lipid IVA). In Rhodopseudomonas palustris (strain HaA2), this protein is Tetraacyldisaccharide 4'-kinase.